The sequence spans 244 residues: Mono-ADP-ribosyltransferase C3 (244 aa).

The signal sequence occupies residues 1–40 (MKGIRKSILCLVLSAGVIAPVTTSIVQSPQKCYACTVDKG). The TR mART core domain maps to 44–244 (DTFTEFTNVE…QIMITAMIFK (201 aa)). NAD(+) is bound by residues T80, N87, R91, 128 to 131 (RGDD), and 167 to 169 (RTE). R128 is a catalytic residue. Residue S174 is part of the active site. NAD(+)-binding positions include 182 to 185 (FGGR) and 211 to 213 (QLE). E213 is an active-site residue.

This sequence to exoenzymes 3 of C.limosum and C.botulinum D phage, and to S.aureus ediN. In terms of assembly, monomer.

Its subcellular location is the secreted. It catalyses the reaction L-asparaginyl-[protein] + NAD(+) = N(4)-(ADP-D-ribosyl)-L-asparaginyl-[protein] + nicotinamide + H(+). ADP-ribosylates eukaryotic Rho and Rac proteins on an asparagine residue. The chain is Mono-ADP-ribosyltransferase C3 from Clostridium botulinum C phage (Clostridium botulinum C bacteriophage).